Here is a 490-residue protein sequence, read N- to C-terminus: RNA-binding post-transcriptional regulator cip1 (490 aa).

3 disordered regions span residues 16–63, 76–97, and 138–199; these read RGLA…GSSA, ASSR…YSQL, and HNVS…GEDT. Positions 34 to 62 are enriched in polar residues; it reads RLQSPLNSPKLQPIGSPQASRKTSGSGSS. Phosphoserine is present on residues Ser-37, Ser-41, Ser-49, Ser-86, and Ser-141. Low complexity-rich tracts occupy residues 76–88 and 141–160; these read ASSR…PSDS and SPPS…ASGK. A compositionally biased stretch (polar residues) spans 164–192; sequence ADTSAEPSLDAFNSTQIKAGSTANSNSTP. The region spanning 202 to 280 is the RRM domain; sequence TAIVVKNIPF…RRLRVEWKRQ (79 aa). Residues Ser-397, Ser-401, and Ser-427 each carry the phosphoserine modification. Phosphothreonine is present on Thr-431. 3 positions are modified to phosphoserine: Ser-435, Ser-456, and Ser-466. Residues 457-490 are disordered; sequence PLQKASTLSSPFNSKNDNDASTSASKQSFGVSHF.

As to quaternary structure, interacts with csx1. Post-translationally, phosphorylated by sty1.

It is found in the cytoplasm. In terms of biological role, regulates global gene expression after oxidative stress. Interacts and stabilizes mRNAs and may regulate their transition between different cytoplasmic components after oxidative stress. The sequence is that of RNA-binding post-transcriptional regulator cip1 (cip1) from Schizosaccharomyces pombe (strain 972 / ATCC 24843) (Fission yeast).